Reading from the N-terminus, the 103-residue chain is Small ribosomal subunit protein uS10 (103 aa).

It belongs to the universal ribosomal protein uS10 family. Part of the 30S ribosomal subunit.

In terms of biological role, involved in the binding of tRNA to the ribosomes. The chain is Small ribosomal subunit protein uS10 from Neisseria gonorrhoeae (strain NCCP11945).